Reading from the N-terminus, the 402-residue chain is Mannonate dehydratase (402 aa).

This sequence belongs to the mannonate dehydratase family. Fe(2+) serves as cofactor. Requires Mn(2+) as cofactor.

The enzyme catalyses D-mannonate = 2-dehydro-3-deoxy-D-gluconate + H2O. It functions in the pathway carbohydrate metabolism; pentose and glucuronate interconversion. In terms of biological role, catalyzes the dehydration of D-mannonate. The polypeptide is Mannonate dehydratase (Rhizobium meliloti (strain 1021) (Ensifer meliloti)).